A 582-amino-acid polypeptide reads, in one-letter code: MVLFNVSRVETTPFGDQKPGTSGLRKKVKVFKQPNYLQNFVQSTFNALTPQNVRGATLVVSGDGRYFSKDAIQIITKMAAGNGLRRVWVGQNGLLSTPAVSAVIRERVGVDGSKATGAFILTASHNPGGPNEDFGIKYNMENGGPAPEGITDKIYENTKTIKEYLTADLPDVDITTIGVTSFSGSEGQFDVEVFDSASDYIKLMKSIFDFESIRKLLSSPKFTFCYDALHGVAGAYAKRIFVEELGAQESSLLNCVPKEDFGGGHPDPNLTYAKELVARMGLGKSNSEVEPPEFGAAADGDADRNMVLGKRFFVTPSDSVAIIAANAVEAIPYFSAGLKGVARSMPTSAALDVVAKSLNLKFFEVPTGWKFFGNLMDAGLCSVCGEESFGTGSDHIREKDGIWAVLAWLSILAYKNRENLGGGKLVTVEDIVHNHWATYGRHYYTRYDYENVDAGAAKELMACLVKLQSSLTEVNEIVSGIQSDVSKVVHADEFEYKDPVDGSISKHQGIRYLFEDGSRLVFRLSGTGSEGATIRLYIEQYEKDPSKTGRDSQDALAPLVAVALGLXKMQEFTGRSAPTVIT.

Arg25 and Ser124 together coordinate alpha-D-glucose 1,6-bisphosphate. The active-site Phosphoserine intermediate is the Ser124. Ser124, Asp299, Asp301, and Asp303 together coordinate Mg(2+). Ser124 carries the post-translational modification Phosphoserine. Residues Asp303, Arg304, Thr367, Glu386, Ser388, and Lys399 each contribute to the alpha-D-glucose 1,6-bisphosphate site.

Belongs to the phosphohexose mutase family. In terms of assembly, monomer. It depends on Mg(2+) as a cofactor.

The protein resides in the cytoplasm. The catalysed reaction is alpha-D-glucose 1-phosphate = alpha-D-glucose 6-phosphate. The enzyme catalyses O-phospho-L-seryl-[protein] + alpha-D-glucose 1-phosphate = alpha-D-glucose 1,6-bisphosphate + L-seryl-[protein]. It carries out the reaction alpha-D-glucose 1,6-bisphosphate + L-seryl-[protein] = O-phospho-L-seryl-[protein] + alpha-D-glucose 6-phosphate. In terms of biological role, catalyzes the reversible isomerization of alpha-D-glucose 1-phosphate to alpha-D-glucose 6-phosphate. The mechanism proceeds via the intermediate compound alpha-D-glucose 1,6-bisphosphate. This enzyme participates in both the breakdown and synthesis of glucose. This Populus tremula (European aspen) protein is Phosphoglucomutase, cytoplasmic (PGM1).